Here is a 362-residue protein sequence, read N- to C-terminus: Glutaminase-asparaginase (362 aa).

Residues 1-25 form the signal peptide; that stretch reads MNAALKTFAPSALALLLILPSSASA. The 328-residue stretch at 35-362 folds into the Asparaginase/glutaminase domain; the sequence is ANVVILATGG…KELQRIFWEY (328 aa). Catalysis depends on Thr45, which acts as the Acyl-ester intermediate. Substrate contacts are provided by residues Ser92 and 125–126; that span reads TD.

Belongs to the asparaginase 1 family. In terms of assembly, homotetramer.

The protein resides in the periplasm. The catalysed reaction is L-glutamine + H2O = L-glutamate + NH4(+). The enzyme catalyses L-asparagine + H2O = L-aspartate + NH4(+). The chain is Glutaminase-asparaginase (ansB) from Pseudomonas putida (strain ATCC 47054 / DSM 6125 / CFBP 8728 / NCIMB 11950 / KT2440).